The sequence spans 552 residues: Chaperonin GroEL (552 aa).

ATP-binding positions include 29-32, K50, 86-90, G420, and D501; these read TAGP and DGTTT.

This sequence belongs to the chaperonin (HSP60) family. In terms of assembly, forms a cylinder of 14 subunits composed of two heptameric rings stacked back-to-back. Interacts with the co-chaperonin GroES.

The protein localises to the cytoplasm. It catalyses the reaction ATP + H2O + a folded polypeptide = ADP + phosphate + an unfolded polypeptide.. Together with its co-chaperonin GroES, plays an essential role in assisting protein folding. The GroEL-GroES system forms a nano-cage that allows encapsulation of the non-native substrate proteins and provides a physical environment optimized to promote and accelerate protein folding. The polypeptide is Chaperonin GroEL (Wolbachia pipientis subsp. Culex pipiens (strain wPip)).